We begin with the raw amino-acid sequence, 228 residues long: Protein-L-isoaspartate O-methyltransferase (228 aa).

The active site involves Ser-74.

This sequence belongs to the methyltransferase superfamily. L-isoaspartyl/D-aspartyl protein methyltransferase family.

The protein resides in the cytoplasm. The catalysed reaction is [protein]-L-isoaspartate + S-adenosyl-L-methionine = [protein]-L-isoaspartate alpha-methyl ester + S-adenosyl-L-homocysteine. Its function is as follows. Catalyzes the methyl esterification of L-isoaspartyl residues in peptides and proteins that result from spontaneous decomposition of normal L-aspartyl and L-asparaginyl residues. It plays a role in the repair and/or degradation of damaged proteins. The polypeptide is Protein-L-isoaspartate O-methyltransferase (Methylorubrum extorquens (strain PA1) (Methylobacterium extorquens)).